Consider the following 176-residue polypeptide: Disulfide bond formation protein B (176 aa).

The Cytoplasmic portion of the chain corresponds to 1–14 (MLQFLNRCSKGRGA). Residues 15–31 (WLLMALTALVLELVALY) traverse the membrane as a helical segment. Over 32-49 (FQHVMLLQPCVMCIYERA) the chain is Periplasmic. A disulfide bridge links Cys-41 with Cys-44. The chain crosses the membrane as a helical span at residues 50–65 (ALFGILGASLLGAIAP). Residues 66 to 71 (KSPLRY) lie on the Cytoplasmic side of the membrane. The helical transmembrane segment at 72–89 (LAIFIWIYSAWKGVQLAW) threads the bilayer. At 90–144 (THTMLQLHPSPFTTCDFFVSFPSWLPLDKWFPAVFVASGDCAVKQWEFLSLEMPQ) the chain is on the periplasmic side. Cys-104 and Cys-130 are joined by a disulfide. The chain crosses the membrane as a helical span at residues 145 to 163 (WLVGIFAAYLFIAILVLIS). The Cytoplasmic portion of the chain corresponds to 164–176 (QFVKPKRRDLFSR).

Belongs to the DsbB family.

It localises to the cell inner membrane. Functionally, required for disulfide bond formation in some periplasmic proteins. Acts by oxidizing the DsbA protein. The chain is Disulfide bond formation protein B from Yersinia enterocolitica serotype O:8 / biotype 1B (strain NCTC 13174 / 8081).